Here is a 66-residue protein sequence, read N- to C-terminus: Large ribosomal subunit protein bL35 (66 aa).

A compositionally biased stretch (basic residues) spans 1–46 (MPKMKTHRASAKRFKRTGNGGLKRHHAFTGHRFHGKTKKQRRHLRK). Positions 1 to 50 (MPKMKTHRASAKRFKRTGNGGLKRHHAFTGHRFHGKTKKQRRHLRKAAMV) are disordered.

It belongs to the bacterial ribosomal protein bL35 family.

This chain is Large ribosomal subunit protein bL35, found in Lactobacillus delbrueckii subsp. bulgaricus (strain ATCC 11842 / DSM 20081 / BCRC 10696 / JCM 1002 / NBRC 13953 / NCIMB 11778 / NCTC 12712 / WDCM 00102 / Lb 14).